A 163-amino-acid polypeptide reads, in one-letter code: 5-hydroxymethyl-dUMP N-hydrolase (163 aa).

An N-acetylalanine modification is found at Ala-2. A 5-hydroxymethyl-dUMP-binding site is contributed by Gly-16. Ser-17 carries the phosphoserine modification. The 5-hydroxymethyl-dUMP site is built by Ile-18, Arg-19, Gly-20, Ser-87, Gly-89, and Glu-93. At Ser-87 the chain carries Phosphoserine. Phosphoserine is present on residues Ser-112, Ser-117, Ser-127, and Ser-158. Ser-117 lines the 5-hydroxymethyl-dUMP pocket.

As to quaternary structure, monomer and homodimer. In terms of tissue distribution, highly expressed in heart, kidney, liver and spleen. Weakly expressed in lung and skeletal muscle.

Its subcellular location is the cytoplasm. It localises to the nucleus. The catalysed reaction is 5-hydroxymethyl-dUMP + H2O = 5-hydroxymethyluracil + 2-deoxy-D-ribose 5-phosphate. In terms of biological role, part of a nucleotide salvage pathway that eliminates epigenetically modified 5-hydroxymethyl-dCMP (hmdCMP) in a two-step process entailing deamination to cytotoxic 5-hydroxymethyl-dUMP (hmdUMP), followed by its hydrolysis into 5-hydroxymethyluracil (hmU) and 2-deoxy-D-ribose 5-phosphate (deoxyribosephosphate). Catalyzes the second step in that pathway, the hydrolysis of the N-glycosidic bond in hmdUMP, degrading this cytotoxic nucleotide to avoid its genomic integration. The chain is 5-hydroxymethyl-dUMP N-hydrolase from Rattus norvegicus (Rat).